A 270-amino-acid chain; its full sequence is 4-hydroxy-tetrahydrodipicolinate reductase (270 aa).

NAD(+) contacts are provided by residues 11–16 (GAGGRM) and Glu-37. Arg-38 is a binding site for NADP(+). NAD(+) is bound by residues 101 to 103 (GTT) and 125 to 128 (APNM). His-158 acts as the Proton donor/acceptor in catalysis. His-159 contributes to the (S)-2,3,4,5-tetrahydrodipicolinate binding site. Lys-162 (proton donor) is an active-site residue. Position 168–169 (168–169 (GT)) interacts with (S)-2,3,4,5-tetrahydrodipicolinate.

This sequence belongs to the DapB family.

The protein resides in the cytoplasm. It carries out the reaction (S)-2,3,4,5-tetrahydrodipicolinate + NAD(+) + H2O = (2S,4S)-4-hydroxy-2,3,4,5-tetrahydrodipicolinate + NADH + H(+). The enzyme catalyses (S)-2,3,4,5-tetrahydrodipicolinate + NADP(+) + H2O = (2S,4S)-4-hydroxy-2,3,4,5-tetrahydrodipicolinate + NADPH + H(+). It functions in the pathway amino-acid biosynthesis; L-lysine biosynthesis via DAP pathway; (S)-tetrahydrodipicolinate from L-aspartate: step 4/4. In terms of biological role, catalyzes the conversion of 4-hydroxy-tetrahydrodipicolinate (HTPA) to tetrahydrodipicolinate. The polypeptide is 4-hydroxy-tetrahydrodipicolinate reductase (Shewanella sp. (strain W3-18-1)).